The chain runs to 559 residues: Urocanate hydratase (559 aa).

NAD(+) contacts are provided by residues 54 to 55 (GG), Q132, 178 to 180 (GMG), E198, R203, 244 to 245 (NA), 265 to 269 (QTSAH), 275 to 276 (YL), and Y324. C412 is an active-site residue. G494 is a binding site for NAD(+).

This sequence belongs to the urocanase family. The cofactor is NAD(+).

It is found in the cytoplasm. It carries out the reaction 4-imidazolone-5-propanoate = trans-urocanate + H2O. It participates in amino-acid degradation; L-histidine degradation into L-glutamate; N-formimidoyl-L-glutamate from L-histidine: step 2/3. Functionally, catalyzes the conversion of urocanate to 4-imidazolone-5-propionate. The chain is Urocanate hydratase from Azotobacter vinelandii (strain DJ / ATCC BAA-1303).